The primary structure comprises 450 residues: Phosphoglucosamine mutase (450 aa).

Ser101 serves as the catalytic Phosphoserine intermediate. Ser101, Asp240, Asp242, and Asp244 together coordinate Mg(2+). Ser101 carries the post-translational modification Phosphoserine.

Belongs to the phosphohexose mutase family. Mg(2+) is required as a cofactor. Post-translationally, activated by phosphorylation.

The catalysed reaction is alpha-D-glucosamine 1-phosphate = D-glucosamine 6-phosphate. Its function is as follows. Catalyzes the conversion of glucosamine-6-phosphate to glucosamine-1-phosphate. This chain is Phosphoglucosamine mutase, found in Streptococcus uberis (strain ATCC BAA-854 / 0140J).